The following is a 131-amino-acid chain: Small ribosomal subunit protein uS8 (131 aa).

Belongs to the universal ribosomal protein uS8 family. In terms of assembly, part of the 30S ribosomal subunit. Contacts proteins S5 and S12.

Functionally, one of the primary rRNA binding proteins, it binds directly to 16S rRNA central domain where it helps coordinate assembly of the platform of the 30S subunit. The protein is Small ribosomal subunit protein uS8 of Dechloromonas aromatica (strain RCB).